The chain runs to 780 residues: Pendrin (780 aa).

The Cytoplasmic portion of the chain corresponds to Met-1–Asp-87. The helical transmembrane segment at Ile-88–Leu-108 threads the bilayer. Position 109 (Ala-109) is a topological domain, extracellular. A helical transmembrane segment spans residues Ala-110–Phe-130. The Cytoplasmic portion of the chain corresponds to Gly-131 to His-135. The chain crosses the membrane as a helical span at residues Ile-136–Ala-156. Over Pro-157 to Thr-191 the chain is Extracellular. A helical membrane pass occupies residues Leu-192–Val-212. Residues Arg-213 to Pro-218 lie on the Cytoplasmic side of the membrane. A helical transmembrane segment spans residues Leu-219–Val-239. At Leu-240–Asn-263 the chain is on the extracellular side. Residues Ile-264–Ala-284 traverse the membrane as a helical segment. Residues Val-285–Lys-295 are Cytoplasmic-facing. The chain crosses the membrane as a helical span at residues Ile-296 to Gly-316. Over Ala-317 to Gly-344 the chain is Extracellular. A helical membrane pass occupies residues Leu-345–Val-365. Residues Ser-366–Glu-384 lie on the Cytoplasmic side of the membrane. The helical transmembrane segment at Phe-385–Thr-405 threads the bilayer. Residues Ala-406 to Gln-421 lie on the Extracellular side of the membrane. The helical transmembrane segment at Val-422 to Leu-442 threads the bilayer. Over Glu-443–Ser-448 the chain is Cytoplasmic. A helical membrane pass occupies residues Val-449–Pro-469. The Extracellular portion of the chain corresponds to Arg-470–Cys-486. A helical membrane pass occupies residues Ile-487–Leu-507. Residues Thr-508–Ser-780 lie on the Cytoplasmic side of the membrane. The STAS domain occupies His-535–Leu-729.

The protein belongs to the SLC26A/SulP transporter (TC 2.A.53) family. Highly expressed in the kidney (at protein level).

The protein resides in the cell membrane. It is found in the apical cell membrane. The catalysed reaction is chloride(in) = chloride(out). It catalyses the reaction iodide(out) = iodide(in). It carries out the reaction hydrogencarbonate(in) + chloride(out) = hydrogencarbonate(out) + chloride(in). The enzyme catalyses iodide(in) + hydrogencarbonate(out) = iodide(out) + hydrogencarbonate(in). The catalysed reaction is iodide(in) + chloride(out) = iodide(out) + chloride(in). It catalyses the reaction formate(in) + chloride(out) = formate(out) + chloride(in). Functionally, sodium-independent transporter of chloride and iodide. Mediates electroneutral chloride-bicarbonate and chloride-formate exchange with 1:1 stoichiometry. Mediates electroneutral iodide-chloride and iodide-bicarbonate exchange. The polypeptide is Pendrin (Slc26a4) (Rattus norvegicus (Rat)).